Here is a 229-residue protein sequence, read N- to C-terminus: MRRTKIVVPIMLTELTELEKVSVSDYLSADIVEWRADFLSADDIFEMAPKFFEKFKESKILFTLRTVREGGNIQVSEKKYLQILQEILKFEPDYIDVEYFSHGPSFAALKNYREKIVLSYHNFDEVPTDLTSRLIKMHEEGTAFVKVAVMPERECDVLDLLQITRDMTLEYGNHFISMAMGDLGRLSRISGYLTGSCWTFAGLENSSAPGQISLKETVEILDLLENELA.

3-dehydroquinate contacts are provided by residues 33–35 (EWR) and Arg-65. The Proton donor/acceptor role is filled by His-121. The active-site Schiff-base intermediate with substrate is Lys-146. Residues Arg-188, Ser-207, and Gln-211 each contribute to the 3-dehydroquinate site.

This sequence belongs to the type-I 3-dehydroquinase family. In terms of assembly, homodimer.

The catalysed reaction is 3-dehydroquinate = 3-dehydroshikimate + H2O. Its pathway is metabolic intermediate biosynthesis; chorismate biosynthesis; chorismate from D-erythrose 4-phosphate and phosphoenolpyruvate: step 3/7. Involved in the third step of the chorismate pathway, which leads to the biosynthesis of aromatic amino acids. Catalyzes the cis-dehydration of 3-dehydroquinate (DHQ) and introduces the first double bond of the aromatic ring to yield 3-dehydroshikimate. The polypeptide is 3-dehydroquinate dehydratase (Lactococcus lactis subsp. cremoris (strain SK11)).